The primary structure comprises 124 residues: U33-theraphotoxin-Cg1c (124 aa).

An N-terminal signal peptide occupies residues 1–17 (MKFAVAIAFTLLVCVFA). Disulfide bonds link C26/C37, C31/C51, C36/C75, C61/C83, and C77/C94. The span at 93-108 (RCQEESGKSDKSKESQ) shows a compositional bias: basic and acidic residues. The disordered stretch occupies residues 93–124 (RCQEESGKSDKSKESQGSDESEESEESKESSG). A compositionally biased stretch (acidic residues) spans 109–118 (GSDESEESEE).

It belongs to the neurotoxin 32 family. In terms of tissue distribution, expressed by the venom gland.

It localises to the secreted. The sequence is that of U33-theraphotoxin-Cg1c from Chilobrachys guangxiensis (Chinese earth tiger tarantula).